Here is a 246-residue protein sequence, read N- to C-terminus: uncharacterized protein (246 aa).

The N-terminal stretch at 1–24 (MGAPLRHCLLVAAALSLGCGVAAA) is a signal peptide. The next 2 helical transmembrane spans lie at 71–91 (YYLG…IGLV) and 104–124 (FTCA…AGGA).

Its subcellular location is the cell membrane. This is an uncharacterized protein from Mycobacterium tuberculosis (strain ATCC 25618 / H37Rv).